Here is a 101-residue protein sequence, read N- to C-terminus: Large ribosomal subunit protein uL24 (101 aa).

This sequence belongs to the universal ribosomal protein uL24 family. In terms of assembly, part of the 50S ribosomal subunit.

In terms of biological role, one of two assembly initiator proteins, it binds directly to the 5'-end of the 23S rRNA, where it nucleates assembly of the 50S subunit. Functionally, one of the proteins that surrounds the polypeptide exit tunnel on the outside of the subunit. The sequence is that of Large ribosomal subunit protein uL24 from Streptococcus agalactiae serotype III (strain NEM316).